The following is a 518-amino-acid chain: Sensor protein kinase HptS (518 aa).

The next 2 membrane-spanning stretches (helical) occupy residues Ile-20–Trp-40 and Gly-222–Ile-242. One can recognise a Histidine kinase domain in the interval Glu-297–Arg-513. Phosphohistidine; by autocatalysis is present on His-325.

Post-translationally, autophosphorylated.

Its subcellular location is the cell membrane. The enzyme catalyses ATP + protein L-histidine = ADP + protein N-phospho-L-histidine.. In terms of biological role, member of the two-component regulatory system HptS/HptR that regulates genes involved in hexose phosphate transport system in response to changes in extracellular phosphate sources. May act as a sensor protein kinase which is autophosphorylated at a histidine residue and transfers its phosphate group to the conserved aspartic acid residue in the regulatory domain of HptS. In turn, HptS antagonizes CcpA-dependent transcription of a subset of CcpA-regulated genes involved in antibiotic susceptibility. This chain is Sensor protein kinase HptS (hptS), found in Staphylococcus aureus (strain MSSA476).